A 181-amino-acid polypeptide reads, in one-letter code: Large ribosomal subunit protein uL5c (181 aa).

Belongs to the universal ribosomal protein uL5 family. In terms of assembly, part of the 50S ribosomal subunit; contacts the 5S rRNA.

The protein localises to the plastid. It is found in the chloroplast. Functionally, binds 5S rRNA, forms part of the central protuberance of the 50S subunit. This is Large ribosomal subunit protein uL5c (rpl5) from Rhodomonas salina (Cryptomonas salina).